A 372-amino-acid chain; its full sequence is Aryl-hydrocarbon-interacting protein-like 1 (372 aa).

Residues 53–145 form the PPIase FKBP-type domain; that stretch reads RQVDQPMHII…DLDELQKEPQ (93 aa). 3 TPR repeats span residues 178–211, 230–263, and 264–297; these read VPVLHGEGNRLFKLGRYEEASSKYQEAIICLRNL, NTLTLNYCQCLLKKEEYYEVLEHTSDILRHHPGI, and VKAYYVRARAHAEVWNEAEAKADLQKVLELEPSM. The segment at 315-372 is disordered; it reads KQEEERLRCRNMLSQGATQPPTEPPAEPHTAPPAELSTGPPAEPPAELPLSPGHSLQH. Over residues 335-345 the composition is skewed to pro residues; it reads PTEPPAEPHTA.

Interacts with NUB1.

It is found in the cytoplasm. The protein resides in the nucleus. Its function is as follows. May be important in protein trafficking and/or protein folding and stabilization. The sequence is that of Aryl-hydrocarbon-interacting protein-like 1 (AIPL1) from Papio cynocephalus (Yellow baboon).